The primary structure comprises 367 residues: Alanine racemase (367 aa).

Lys35 functions as the Proton acceptor; specific for D-alanine in the catalytic mechanism. The residue at position 35 (Lys35) is an N6-(pyridoxal phosphate)lysine. Position 130 (Arg130) interacts with substrate. Tyr256 serves as the catalytic Proton acceptor; specific for L-alanine. Substrate is bound at residue Met304.

Belongs to the alanine racemase family. Requires pyridoxal 5'-phosphate as cofactor.

The enzyme catalyses L-alanine = D-alanine. It functions in the pathway amino-acid biosynthesis; D-alanine biosynthesis; D-alanine from L-alanine: step 1/1. In terms of biological role, catalyzes the interconversion of L-alanine and D-alanine. May also act on other amino acids. This Methylibium petroleiphilum (strain ATCC BAA-1232 / LMG 22953 / PM1) protein is Alanine racemase (alr).